A 398-amino-acid chain; its full sequence is Elongation factor Tu (398 aa).

The region spanning 10–207 (KPHVNIGTIG…TVDSYIPEPE (198 aa)) is the tr-type G domain. The tract at residues 19–26 (GHVDHGKT) is G1. 19–26 (GHVDHGKT) contacts GTP. Thr-26 provides a ligand contact to Mg(2+). A G2 region spans residues 63 to 67 (GITIN). The interval 84–87 (DAPG) is G3. GTP is bound by residues 84-88 (DAPGH) and 139-142 (NKVD). The interval 139–142 (NKVD) is G4. The G5 stretch occupies residues 177–179 (SAL).

It belongs to the TRAFAC class translation factor GTPase superfamily. Classic translation factor GTPase family. EF-Tu/EF-1A subfamily. Monomer.

The protein resides in the cytoplasm. It catalyses the reaction GTP + H2O = GDP + phosphate + H(+). Its function is as follows. GTP hydrolase that promotes the GTP-dependent binding of aminoacyl-tRNA to the A-site of ribosomes during protein biosynthesis. This chain is Elongation factor Tu, found in Streptococcus pyogenes serotype M28 (strain MGAS6180).